The sequence spans 77 residues: Large ribosomal subunit protein bL28 (77 aa).

This sequence belongs to the bacterial ribosomal protein bL28 family.

The sequence is that of Large ribosomal subunit protein bL28 from Polaromonas naphthalenivorans (strain CJ2).